Reading from the N-terminus, the 3330-residue chain is Laminin subunit alpha-3 (3330 aa).

The signal sequence occupies residues 1-31; it reads MAVALGRAPRSLPLLLTLLLLLLLRMSPSWS. The 256-residue stretch at 40–295 folds into the Laminin N-terminal domain; that stretch reads SSRSLHPPYF…SIKDISVGGR (256 aa). Asn-139 carries N-linked (GlcNAc...) asparagine glycosylation. The tract at residues 295–725 is domain V; the sequence is RCVCNGHAEA…NNYYFPDLHH (431 aa). 27 disulfides stabilise this stretch: Cys-296–Cys-305, Cys-298–Cys-316, Cys-318–Cys-327, Cys-330–Cys-350, Cys-353–Cys-362, Cys-355–Cys-387, Cys-390–Cys-399, Cys-402–Cys-420, Cys-423–Cys-433, Cys-425–Cys-440, Cys-442–Cys-451, Cys-454–Cys-464, Cys-488–Cys-500, Cys-490–Cys-506, Cys-508–Cys-517, Cys-520–Cys-530, Cys-533–Cys-545, Cys-535–Cys-552, Cys-554–Cys-563, Cys-566–Cys-583, Cys-628–Cys-642, Cys-630–Cys-649, Cys-651–Cys-660, Cys-663–Cys-678, Cys-681–Cys-693, Cys-683–Cys-700, and Cys-702–Cys-711. 8 Laminin EGF-like domains span residues 296 to 350, 353 to 420, 423 to 464, 488 to 530, 533 to 576, 582 to 625, 628 to 678, and 681 to 725; these read CVCN…HNEC, CNCH…LHGC, CSCD…FPFC, CDCN…FPIC, CQCS…FPYC, VCHP…PRGC, CQCH…YFGC, and CQCD…DLHH. N-linked (GlcNAc...) asparagine glycosylation occurs at Asn-445. The interval 793–1262 is domain IV 1 (domain IV B); it reads TEAISGRITL…VAFYHNGAIP (470 aa). A domain III B region spans residues 1263–1462; that stretch reads CECDPAGTAG…CFCFGVNTDC (200 aa). 12 disulfides stabilise this stretch: Cys-1309-Cys-1316, Cys-1311-Cys-1323, Cys-1325-Cys-1334, Cys-1337-Cys-1350, Cys-1353-Cys-1368, Cys-1355-Cys-1375, Cys-1377-Cys-1386, Cys-1389-Cys-1399, Cys-1402-Cys-1414, Cys-1404-Cys-1421, Cys-1423-Cys-1432, and Cys-1435-Cys-1450. 3 consecutive Laminin EGF-like domains span residues 1309 to 1352, 1353 to 1401, and 1402 to 1452; these read CNCG…GCDV, CNCS…ECVP, and CSCN…GCTK. N-linked (GlcNAc...) asparagine glycosylation occurs at Asn-1354. The Laminin EGF-like 12; first part domain occupies 1453-1462; sequence CFCFGVNTDC. Residues 1466–1650 form the Laminin IV type A domain; it reads HKQRAKFVDM…SGPRAHLVEM (185 aa). The 33-residue stretch at 1651–1683 folds into the Laminin EGF-like 12; second part domain; it reads CACPPDYTGDSCQGCRPGYYWDNKSLPVGRCVP. Residues 1651–1818 are domain III A; the sequence is CACPPDYTGD…DGSPAEECDD (168 aa). N-linked (GlcNAc...) asparagine glycosylation occurs at Asn-1673. Disulfide bonds link Cys-1684/Cys-1693, Cys-1686/Cys-1700, Cys-1703/Cys-1712, Cys-1715/Cys-1728, Cys-1731/Cys-1743, Cys-1733/Cys-1752, Cys-1754/Cys-1763, and Cys-1766/Cys-1781. Laminin EGF-like domains are found at residues 1684–1730 and 1731–1783; these read CNCN…SCRV and CPCP…SCQP. In terms of domain architecture, Laminin EGF-like 15; truncated spans 1784-1818; it reads CNCNSNGQLGPCDPLTGDCVNQEPKDGSPAEECDD. Residues 1819–2385 are domain II and I; the sequence is CDSCVMTLLN…ARDAANKVAI (567 aa). Coiled coils occupy residues 1851 to 1980, 2012 to 2057, 2088 to 2165, and 2211 to 2238; these read TGAL…LRSR, VENN…HENE, LLQT…GDEL, and KRAK…QQVS. Asn-2159 carries N-linked (GlcNAc...) asparagine glycosylation. Residue Asn-2261 is glycosylated (N-linked (GlcNAc...) asparagine). The short motif at 2274-2276 is the Cell attachment site element; sequence RGD. A coiled-coil region spans residues 2318-2383; it reads SARREDFSKA…QQARDAANKV (66 aa). Asn-2332, Asn-2361, Asn-2498, Asn-2580, and Asn-2747 each carry an N-linked (GlcNAc...) asparagine glycan. 5 consecutive Laminin G-like domains span residues 2386 to 2587, 2594 to 2756, 2763 to 2923, 2983 to 3147, and 3154 to 3327; these read PMRF…VEPC, SDKN…TKKC, VRTA…LGGC, ALQF…VSPC, and KGIY…LNGC. 3 disulfide bridges follow: Cys-2557-Cys-2587, Cys-2733-Cys-2756, and Cys-2891-Cys-2923. A glycan (N-linked (GlcNAc...) asparagine) is linked at Asn-3094. A disulfide bridge links Cys-3124 with Cys-3147. A glycan (N-linked (GlcNAc...) asparagine) is linked at Asn-3270. An intrachain disulfide couples Cys-3299 to Cys-3327.

In terms of assembly, laminin is a complex glycoprotein, consisting of three different polypeptide chains (alpha, beta, gamma), which are bound to each other by disulfide bonds into a cross-shaped molecule comprising one long and three short arms with globules at each end. Alpha-3 is a subunit of laminin-5 (laminin-332 or epiligrin/kalinin/nicein), laminin-6 (laminin-311 or K-laminin) and laminin-7 (laminin-321 or KS-laminin). As to expression, basal membrane of the upper alimentary tract and urinary and nasal epithelia, salivary glands and teeth (both variants). Isoform A is predominantly expressed in skin, hair follicles and developing neurons of the trigeminal ganglion. Isoform B was found in bronchi, alveoli, stomach, intestinal crypts, whisker pads, CNS, telencephalic neuroectoderm, thalamus, Rathke pouch and periventricular subependymal germinal layer.

Its subcellular location is the secreted. It is found in the extracellular space. The protein resides in the extracellular matrix. The protein localises to the basement membrane. In terms of biological role, binding to cells via a high affinity receptor, laminin is thought to mediate the attachment, migration and organization of cells into tissues during embryonic development by interacting with other extracellular matrix components. Functionally, laminin-5 is thought to be involved in (1) cell adhesion via integrin alpha-3/beta-1 in focal adhesion and integrin alpha-6/beta-4 in hemidesmosomes, (2) signal transduction via tyrosine phosphorylation of pp125-FAK and p80, (3) differentiation of keratinocytes. In Mus musculus (Mouse), this protein is Laminin subunit alpha-3 (Lama3).